Reading from the N-terminus, the 373-residue chain is Peptide chain release factor 2 (373 aa).

Gln252 is modified (N5-methylglutamine).

Belongs to the prokaryotic/mitochondrial release factor family. Post-translationally, methylated by PrmC. Methylation increases the termination efficiency of RF2.

Its subcellular location is the cytoplasm. Functionally, peptide chain release factor 2 directs the termination of translation in response to the peptide chain termination codons UGA and UAA. The polypeptide is Peptide chain release factor 2 (Staphylococcus saprophyticus subsp. saprophyticus (strain ATCC 15305 / DSM 20229 / NCIMB 8711 / NCTC 7292 / S-41)).